The primary structure comprises 605 residues: Isocitrate dehydrogenase kinase/phosphatase (605 aa).

ATP contacts are provided by residues 353–359 and Lys374; that span reads APGFKGT. Asp413 is a catalytic residue.

The protein belongs to the AceK family.

The protein resides in the cytoplasm. The enzyme catalyses L-seryl-[isocitrate dehydrogenase] + ATP = O-phospho-L-seryl-[isocitrate dehydrogenase] + ADP + H(+). Its function is as follows. Bifunctional enzyme which can phosphorylate or dephosphorylate isocitrate dehydrogenase (IDH) on a specific serine residue. This is a regulatory mechanism which enables bacteria to bypass the Krebs cycle via the glyoxylate shunt in response to the source of carbon. When bacteria are grown on glucose, IDH is fully active and unphosphorylated, but when grown on acetate or ethanol, the activity of IDH declines drastically concomitant with its phosphorylation. The polypeptide is Isocitrate dehydrogenase kinase/phosphatase (Rhodopseudomonas palustris (strain HaA2)).